A 558-amino-acid chain; its full sequence is Urocanate hydratase (558 aa).

NAD(+)-binding positions include 50–51 (GG), Q128, 174–176 (GMG), E194, R199, 240–241 (NA), 261–265 (QTSAH), 271–272 (YI), and Y320. C408 is a catalytic residue. Residue G490 participates in NAD(+) binding.

The protein belongs to the urocanase family. The cofactor is NAD(+).

It localises to the cytoplasm. The enzyme catalyses 4-imidazolone-5-propanoate = trans-urocanate + H2O. It participates in amino-acid degradation; L-histidine degradation into L-glutamate; N-formimidoyl-L-glutamate from L-histidine: step 2/3. Catalyzes the conversion of urocanate to 4-imidazolone-5-propionate. This is Urocanate hydratase from Deinococcus radiodurans (strain ATCC 13939 / DSM 20539 / JCM 16871 / CCUG 27074 / LMG 4051 / NBRC 15346 / NCIMB 9279 / VKM B-1422 / R1).